The chain runs to 156 residues: Cyanate hydratase (156 aa).

Active-site residues include arginine 96, glutamate 99, and serine 122.

This sequence belongs to the cyanase family.

It carries out the reaction cyanate + hydrogencarbonate + 3 H(+) = NH4(+) + 2 CO2. Catalyzes the reaction of cyanate with bicarbonate to produce ammonia and carbon dioxide. The chain is Cyanate hydratase from Burkholderia vietnamiensis (strain G4 / LMG 22486) (Burkholderia cepacia (strain R1808)).